Here is a 215-residue protein sequence, read N- to C-terminus: Probable transaldolase (215 aa).

Residue K83 is the Schiff-base intermediate with substrate of the active site.

This sequence belongs to the transaldolase family. Type 3B subfamily.

Its subcellular location is the cytoplasm. It catalyses the reaction D-sedoheptulose 7-phosphate + D-glyceraldehyde 3-phosphate = D-erythrose 4-phosphate + beta-D-fructose 6-phosphate. The protein operates within carbohydrate degradation; pentose phosphate pathway; D-glyceraldehyde 3-phosphate and beta-D-fructose 6-phosphate from D-ribose 5-phosphate and D-xylulose 5-phosphate (non-oxidative stage): step 2/3. Transaldolase is important for the balance of metabolites in the pentose-phosphate pathway. In Methanococcus maripaludis (strain C6 / ATCC BAA-1332), this protein is Probable transaldolase.